Here is a 205-residue protein sequence, read N- to C-terminus: Putative 3-methyladenine DNA glycosylase (205 aa).

It belongs to the DNA glycosylase MPG family.

This chain is Putative 3-methyladenine DNA glycosylase, found in Bacillus cereus (strain ATCC 14579 / DSM 31 / CCUG 7414 / JCM 2152 / NBRC 15305 / NCIMB 9373 / NCTC 2599 / NRRL B-3711).